The chain runs to 153 residues: Heavy metal-associated isoprenylated plant protein 25 (153 aa).

The HMA domain occupies 24–88 (LQTVDVRVLI…IIHRTGKRAE (65 aa)). A metal cation contacts are provided by C35 and C38. C150 is subject to Cysteine methyl ester. The S-farnesyl cysteine moiety is linked to residue C150. A propeptide spans 151-153 (VVM) (removed in mature form).

This sequence belongs to the HIPP family. As to expression, expressed in roots, shoot apical meristem, trichomes and flower buds.

The protein localises to the membrane. In terms of biological role, heavy-metal-binding protein. Binds cadmium. May be involved in cadmium transport and play a role in cadmium detoxification. This is Heavy metal-associated isoprenylated plant protein 25 from Arabidopsis thaliana (Mouse-ear cress).